The sequence spans 88 residues: Acylphosphatase (88 aa).

Residues 3 to 88 enclose the Acylphosphatase-like domain; sequence AARFVVSGVV…VPPTEDFVTG (86 aa). Residues Arg18 and Asn36 contribute to the active site.

This sequence belongs to the acylphosphatase family.

It catalyses the reaction an acyl phosphate + H2O = a carboxylate + phosphate + H(+). The protein is Acylphosphatase (acyP) of Xanthomonas euvesicatoria pv. vesicatoria (strain 85-10) (Xanthomonas campestris pv. vesicatoria).